The primary structure comprises 159 residues: 2-C-methyl-D-erythritol 2,4-cyclodiphosphate synthase (159 aa).

2 residues coordinate a divalent metal cation: Asp10 and His12. Residues 10-12 (DVH) and 36-37 (HS) each bind 4-CDP-2-C-methyl-D-erythritol 2-phosphate. Position 44 (His44) interacts with a divalent metal cation. 4-CDP-2-C-methyl-D-erythritol 2-phosphate is bound by residues 58–60 (DIG) and Arg144.

This sequence belongs to the IspF family. As to quaternary structure, homotrimer. A divalent metal cation is required as a cofactor.

The catalysed reaction is 4-CDP-2-C-methyl-D-erythritol 2-phosphate = 2-C-methyl-D-erythritol 2,4-cyclic diphosphate + CMP. It participates in isoprenoid biosynthesis; isopentenyl diphosphate biosynthesis via DXP pathway; isopentenyl diphosphate from 1-deoxy-D-xylulose 5-phosphate: step 4/6. Its function is as follows. Involved in the biosynthesis of isopentenyl diphosphate (IPP) and dimethylallyl diphosphate (DMAPP), two major building blocks of isoprenoid compounds. Catalyzes the conversion of 4-diphosphocytidyl-2-C-methyl-D-erythritol 2-phosphate (CDP-ME2P) to 2-C-methyl-D-erythritol 2,4-cyclodiphosphate (ME-CPP) with a corresponding release of cytidine 5-monophosphate (CMP). This is 2-C-methyl-D-erythritol 2,4-cyclodiphosphate synthase from Paraburkholderia phymatum (strain DSM 17167 / CIP 108236 / LMG 21445 / STM815) (Burkholderia phymatum).